We begin with the raw amino-acid sequence, 105 residues long: UPF0235 protein A1G_07140 (105 aa).

The protein belongs to the UPF0235 family.

The chain is UPF0235 protein A1G_07140 from Rickettsia rickettsii (strain Sheila Smith).